The primary structure comprises 71 residues: Beta-defensin 131A (71 aa).

The signal sequence occupies residues 1–22 (MRVLFFVFGVLSLMFTVPPARS). Disulfide bonds link C29/C57, C37/C51, and C41/C58.

The protein belongs to the beta-defensin family.

It is found in the secreted. In terms of biological role, has antibacterial activity. Upon stimulation with lipoteichoic acid, promotes cytokines and chemokines production and secretion. The protein is Beta-defensin 131A of Pan troglodytes (Chimpanzee).